Consider the following 83-residue polypeptide: Translational regulator CsrA (83 aa).

It belongs to the CsrA/RsmA family. In terms of assembly, homodimer; the beta-strands of each monomer intercalate to form a hydrophobic core, while the alpha-helices form wings that extend away from the core.

The protein resides in the cytoplasm. Its function is as follows. A translational regulator that binds mRNA to regulate translation initiation and/or mRNA stability. Usually binds in the 5'-UTR at or near the Shine-Dalgarno sequence preventing ribosome-binding, thus repressing translation. Its main target seems to be the major flagellin gene, while its function is anatagonized by FliW. This is Translational regulator CsrA from Thermotoga petrophila (strain ATCC BAA-488 / DSM 13995 / JCM 10881 / RKU-1).